A 187-amino-acid chain; its full sequence is Large ribosomal subunit protein uL22 (187 aa).

This sequence belongs to the universal ribosomal protein uL22 family.

This chain is Large ribosomal subunit protein uL22 (RPL17), found in Theileria parva (East coast fever infection agent).